Here is a 249-residue protein sequence, read N- to C-terminus: Elongator complex protein 6 homolog (249 aa).

Belongs to the ELP6 family. As to quaternary structure, component of the elongator complex.

The protein localises to the cytoplasm. It is found in the nucleus. The protein operates within tRNA modification; 5-methoxycarbonylmethyl-2-thiouridine-tRNA biosynthesis. Component of the elongator complex which is required for multiple tRNA modifications, including mcm5U (5-methoxycarbonylmethyl uridine), mcm5s2U (5-methoxycarbonylmethyl-2-thiouridine), and ncm5U (5-carbamoylmethyl uridine). The elongator complex catalyzes formation of carboxymethyluridine in the wobble base at position 34 in tRNAs. The polypeptide is Elongator complex protein 6 homolog (Schizosaccharomyces pombe (strain 972 / ATCC 24843) (Fission yeast)).